Reading from the N-terminus, the 1026-residue chain is DNA cross-link repair 1A protein (1026 aa).

The nuclear localization region stretch occupies residues Met1 to Pro189. The segment at Glu12–Thr110 is disordered. Basic and acidic residues predominate over residues Ser34 to Cys65. The span at Ser71 to Ser82 shows a compositional bias: low complexity. The segment covering Lys98–Lys107 has biased composition (basic residues). The UBZ4-type zinc finger occupies Asp118 to Pro148. 4 residues coordinate Zn(2+): Cys121, Cys124, His139, and Cys143. Residues Lys359, Lys434, and Lys522 each participate in a glycyl lysine isopeptide (Lys-Gly) (interchain with G-Cter in SUMO2) cross-link. The nuclear focus formation stretch occupies residues Ser401–Ala602. Disordered stretches follow at residues Pro474–Val542, Glu560–Lys590, and Ala602–Gly651. Residues Ser527–Lys540 are compositionally biased toward low complexity. Polar residues predominate over residues Glu569–Gln581. Phosphoserine is present on residues Ser574 and Ser578. A compositionally biased stretch (basic residues) spans Arg619–Thr628. Residue Lys657 forms a Glycyl lysine isopeptide (Lys-Gly) (interchain with G-Cter in SUMO2) linkage.

The protein belongs to the DNA repair metallo-beta-lactamase (DRMBL) family. Binds constitutively to TP53BP1. Binds CDC27, which is itself a component of the anaphase promoting complex (APC). Binds PIAS1.

It localises to the nucleus. The enzyme catalyses a beta-lactam + H2O = a substituted beta-amino acid. May be required for DNA interstrand cross-link repair. Also required for checkpoint mediated cell cycle arrest in early prophase in response to mitotic spindle poisons. The protein is DNA cross-link repair 1A protein (Dclre1a) of Mus musculus (Mouse).